Reading from the N-terminus, the 934-residue chain is 2-oxoglutarate dehydrogenase E1 component (934 aa).

It belongs to the alpha-ketoglutarate dehydrogenase family. As to quaternary structure, homodimer. Part of the 2-oxoglutarate dehydrogenase (OGDH) complex composed of E1 (2-oxoglutarate dehydrogenase), E2 (dihydrolipoamide succinyltransferase) and E3 (dihydrolipoamide dehydrogenase); the complex contains multiple copies of the three enzymatic components (E1, E2 and E3). Requires thiamine diphosphate as cofactor.

It carries out the reaction N(6)-[(R)-lipoyl]-L-lysyl-[protein] + 2-oxoglutarate + H(+) = N(6)-[(R)-S(8)-succinyldihydrolipoyl]-L-lysyl-[protein] + CO2. E1 component of the 2-oxoglutarate dehydrogenase (OGDH) complex which catalyzes the decarboxylation of 2-oxoglutarate, the first step in the conversion of 2-oxoglutarate to succinyl-CoA and CO(2). The polypeptide is 2-oxoglutarate dehydrogenase E1 component (Staphylococcus epidermidis (strain ATCC 35984 / DSM 28319 / BCRC 17069 / CCUG 31568 / BM 3577 / RP62A)).